The chain runs to 343 residues: Thromboxane A2 receptor (343 aa).

Topologically, residues 1–29 (MWPNASSLGPCFRPMNITLEERRLIASPW) are extracellular. 2 N-linked (GlcNAc...) asparagine glycosylation sites follow: N4 and N16. A helical membrane pass occupies residues 30 to 52 (FAASFCLVGLASNLLALSVLMGA). Residues 53 to 66 (RQGSSQSRSSFLTF) are Cytoplasmic-facing. Residues 67–87 (LCGLVLTDFMGLLVTGAIVVT) traverse the membrane as a helical segment. The Extracellular segment spans residues 88–106 (QHFVLFEWQAVDPGCSLCH). C105 and C183 are oxidised to a cystine. Residues 107–128 (FMGVIMVFFGLCPLLLGAAMAS) form a helical membrane-spanning segment. Residues 129–149 (ERFLGITRPFSRPATASQRRA) lie on the Cytoplasmic side of the membrane. Residues 150–172 (WTTVGLVWASALALGLLPLLGVG) traverse the membrane as a helical segment. Over 173–193 (HYTVQYPGSWCFLTLGTDPGD) the chain is Extracellular. A helical membrane pass occupies residues 194–219 (VAFGLLFALLGSISVGMSFLLNTISV). Topologically, residues 220–246 (ATLCHVYHGQATAQQRPRDCEVEMMVQ) are cytoplasmic. Residues 247–270 (LMGIMVVASICWMPLLVFIAQTVL) form a helical membrane-spanning segment. Residues 271 to 289 (QSPPAMSPTGQLSRLTERQ) lie on the Extracellular side of the membrane. Residues 290–311 (LLIYLRVATWNQILDPWVYILF) form a helical membrane-spanning segment. The Cytoplasmic segment spans residues 312–343 (RRAVIQRFYPRLSTRSRSLSLQPQLTRRSTIH). Residues S329 and S331 each carry the phosphoserine modification.

It belongs to the G-protein coupled receptor 1 family. Interacts with RPGRIP1L. Interacts with RACK1; the interaction regulates TBXA2R cell surface expression.

Its subcellular location is the cell membrane. In terms of biological role, receptor for thromboxane A2 (TXA2), a potent stimulator of platelet aggregation. The activity of this receptor is mediated by a G-protein that activates a phosphatidylinositol-calcium second messenger system. In the kidney, the binding of TXA2 to glomerular TP receptors causes intense vasoconstriction. Activates phospholipase C and adenylyl cyclase. The protein is Thromboxane A2 receptor (TBXA2R) of Bos taurus (Bovine).